The primary structure comprises 100 residues: MIPLTHGLILAAILFVLGLTGLVIRRNLLFMLIGLEIMINASALAFVVAGSYWGQPDGQVMYILAISLAAAEASIGLALLLQLHRRRQNLNIDSVSELRG.

3 helical membrane passes run 4 to 24 (LTHG…GLVI), 28 to 48 (LLFM…AFVV), and 60 to 80 (VMYI…LALL).

This sequence belongs to the complex I subunit 4L family. In terms of assembly, NDH-1 is composed of 13 different subunits. Subunits NuoA, H, J, K, L, M, N constitute the membrane sector of the complex.

The protein resides in the cell inner membrane. The catalysed reaction is a quinone + NADH + 5 H(+)(in) = a quinol + NAD(+) + 4 H(+)(out). Its function is as follows. NDH-1 shuttles electrons from NADH, via FMN and iron-sulfur (Fe-S) centers, to quinones in the respiratory chain. The immediate electron acceptor for the enzyme in this species is believed to be ubiquinone. Couples the redox reaction to proton translocation (for every two electrons transferred, four hydrogen ions are translocated across the cytoplasmic membrane), and thus conserves the redox energy in a proton gradient. The chain is NADH-quinone oxidoreductase subunit K from Enterobacter sp. (strain 638).